Reading from the N-terminus, the 169-residue chain is Ureidoglycolate lyase (169 aa).

Belongs to the ureidoglycolate lyase family. As to quaternary structure, homodimer. The cofactor is Ni(2+).

The catalysed reaction is (S)-ureidoglycolate = urea + glyoxylate. It functions in the pathway nitrogen metabolism; (S)-allantoin degradation. In terms of biological role, catalyzes the catabolism of the allantoin degradation intermediate (S)-ureidoglycolate, generating urea and glyoxylate. Involved in the utilization of allantoin as nitrogen source. This is Ureidoglycolate lyase from Brucella ovis (strain ATCC 25840 / 63/290 / NCTC 10512).